A 266-amino-acid chain; its full sequence is Phosphate import ATP-binding protein PstB 1 (266 aa).

The ABC transporter domain maps to 18 to 261; it reads AQTSNLSFYY…PTNQLTEQYV (244 aa). 50-57 contacts ATP; that stretch reads GPSGCGKT.

The protein belongs to the ABC transporter superfamily. Phosphate importer (TC 3.A.1.7) family. In terms of assembly, the complex is composed of two ATP-binding proteins (PstB), two transmembrane proteins (PstC and PstA) and a solute-binding protein (PstS).

It localises to the cell inner membrane. The enzyme catalyses phosphate(out) + ATP + H2O = ADP + 2 phosphate(in) + H(+). Its function is as follows. Part of the ABC transporter complex PstSACB involved in phosphate import. Responsible for energy coupling to the transport system. This is Phosphate import ATP-binding protein PstB 1 from Gloeobacter violaceus (strain ATCC 29082 / PCC 7421).